A 227-amino-acid chain; its full sequence is HTH-type transcriptional regulator ArcR (227 aa).

A nucleoside 3',5'-cyclic phosphate is bound at residue V41 to D130. In terms of domain architecture, HTH crp-type spans K156–K227. Residues I189 to H208 constitute a DNA-binding region (H-T-H motif).

The protein localises to the cytoplasm. Positively regulates the expression of the arcABDCR operon under anaerobic conditions, thus playing an essential role in arginine catabolism. May also control the expression of genes encoding proteins which are involved in anaerobic metabolism. Can bind cyclic AMP. In Staphylococcus haemolyticus (strain JCSC1435), this protein is HTH-type transcriptional regulator ArcR (arcR).